The chain runs to 103 residues: Large ribosomal subunit protein bL21 (103 aa).

It belongs to the bacterial ribosomal protein bL21 family. Part of the 50S ribosomal subunit. Contacts protein L20.

Its function is as follows. This protein binds to 23S rRNA in the presence of protein L20. The polypeptide is Large ribosomal subunit protein bL21 (Dechloromonas aromatica (strain RCB)).